The sequence spans 153 residues: MSQKACYVCGKIGHLAEDCDSERLCYNCNKPGHVQTDCTMPRTVEFKQCYNCGETGHVRSECTVQRCFNCNQTGHISRECPEPKKTSRFSKVSCYKCGGPNHMAKDCMKEDGISGLKCYTCGQAGHMSRDCQNDRLCYNCNETGHISKDCPKA.

CCHC-type zinc fingers lie at residues Lys4–Ser21, Arg23–Met40, Lys47–Val64, Gln65–Glu82, Val92–Lys109, Leu116–Asn133, and Arg135–Lys152.

Its subcellular location is the cytoplasm. In terms of biological role, may act in the sexual differentiation pathway. The chain is Zinc finger protein GIS2 (GIS2) from Saccharomyces cerevisiae (strain ATCC 204508 / S288c) (Baker's yeast).